The sequence spans 350 residues: Phenylalanine--tRNA ligase alpha subunit (350 aa).

Residue Glu-257 participates in Mg(2+) binding.

It belongs to the class-II aminoacyl-tRNA synthetase family. Phe-tRNA synthetase alpha subunit type 1 subfamily. In terms of assembly, tetramer of two alpha and two beta subunits. Mg(2+) is required as a cofactor.

Its subcellular location is the cytoplasm. It catalyses the reaction tRNA(Phe) + L-phenylalanine + ATP = L-phenylalanyl-tRNA(Phe) + AMP + diphosphate + H(+). This chain is Phenylalanine--tRNA ligase alpha subunit, found in Listeria monocytogenes serotype 4b (strain CLIP80459).